Reading from the N-terminus, the 57-residue chain is uncharacterized protein (57 aa).

A helical membrane pass occupies residues 10–27; the sequence is FGLLWLIIGSEAFHLNAL. Residues 28-55 adopt a coiled-coil conformation; it reads KQDHLERMKQYDAKIRLAKHEFDDTSNE.

It is found in the membrane. This is an uncharacterized protein from Schizosaccharomyces pombe (strain 972 / ATCC 24843) (Fission yeast).